The sequence spans 525 residues: MNKSVIGTKQMVVSPHYLASQAGNRILDKGGNAFDAAVAVSACLAVVYPHMTGLGGDSFWLTFHQETKAVKVYNGSGRSGKNVTRDVYKGKSAIPLRGIDSAITVPGMVDSWDAVLKEYGRLSLADVLEPARDYAQNGFPVSADQCRHTEKNIELLASTPYTADIFTRRGKAPVPGERFVQKELADSLNLIAEKGRSAFYEGDLAQRIVSHLQNNGSYMTIDDFKAHRGEWAAPVSSDYRGYSVYQAPPNSQGFTGLLTLNILENYDFTQIEHGSFEYYHVLVEALKKSFLDRDAVLTDPAFADIPLERLLDKRYAKQLAEEIGYLAIPAESRPVGSDTAYAAVIDADGNAVSFIQSLYFEFGSAVTAGDTGILLQNRGSFFSLDENHVNTLEPRKRTFHTLMPAMVCKGGKPKILYGTQGGEGQPQTQTAIITRMLDYGMHPQQAISEPRWVWGRTWGEEYEGLRVEGRFTDKTIQKLKDSGHLVEVVGDYDPLMGQAAAIKVDEEGFLQGGADPRGDGAAVGI.

Thr339 serves as the catalytic Nucleophile.

Belongs to the gamma-glutamyltransferase family. As to quaternary structure, this enzyme consists of two polypeptide chains, which are synthesized from a single polypeptide. Post-translationally, cleaved by autocatalysis into a large and a small subunit.

The enzyme catalyses an N-terminal (5-L-glutamyl)-[peptide] + an alpha-amino acid = 5-L-glutamyl amino acid + an N-terminal L-alpha-aminoacyl-[peptide]. The catalysed reaction is glutathione + H2O = L-cysteinylglycine + L-glutamate. It carries out the reaction an S-substituted glutathione + H2O = an S-substituted L-cysteinylglycine + L-glutamate. Overexpressed protein with an N-terminal His tag has been reported not to hydrolyze glutathione; it is not clear if the construct is processed to 2 subunits. This chain is Glutathione hydrolase-like YwrD proenzyme (ywrD), found in Bacillus subtilis (strain 168).